The primary structure comprises 264 residues: S-adenosylmethionine decarboxylase proenzyme (264 aa).

Serine 113 serves as the catalytic Schiff-base intermediate with substrate; via pyruvic acid. Serine 113 carries the pyruvic acid (Ser); by autocatalysis modification. The active-site Proton acceptor; for processing activity is the histidine 118. Catalysis depends on cysteine 141, which acts as the Proton donor; for catalytic activity.

It belongs to the prokaryotic AdoMetDC family. Type 2 subfamily. In terms of assembly, heterooctamer of four alpha and four beta chains arranged as a tetramer of alpha/beta heterodimers. Pyruvate is required as a cofactor. In terms of processing, is synthesized initially as an inactive proenzyme. Formation of the active enzyme involves a self-maturation process in which the active site pyruvoyl group is generated from an internal serine residue via an autocatalytic post-translational modification. Two non-identical subunits are generated from the proenzyme in this reaction, and the pyruvate is formed at the N-terminus of the alpha chain, which is derived from the carboxyl end of the proenzyme. The post-translation cleavage follows an unusual pathway, termed non-hydrolytic serinolysis, in which the side chain hydroxyl group of the serine supplies its oxygen atom to form the C-terminus of the beta chain, while the remainder of the serine residue undergoes an oxidative deamination to produce ammonia and the pyruvoyl group blocking the N-terminus of the alpha chain.

It carries out the reaction S-adenosyl-L-methionine + H(+) = S-adenosyl 3-(methylsulfanyl)propylamine + CO2. The protein operates within amine and polyamine biosynthesis; S-adenosylmethioninamine biosynthesis; S-adenosylmethioninamine from S-adenosyl-L-methionine: step 1/1. Functionally, catalyzes the decarboxylation of S-adenosylmethionine to S-adenosylmethioninamine (dcAdoMet), the propylamine donor required for the synthesis of the polyamines spermine and spermidine from the diamine putrescine. The polypeptide is S-adenosylmethionine decarboxylase proenzyme (Hahella chejuensis (strain KCTC 2396)).